The chain runs to 184 residues: Putative rRNA methyltransferase YlbH (184 aa).

Residues 1-22 (MRVISGSKKGRSLKAVAGTSTR) are disordered.

It belongs to the methyltransferase superfamily. RsmD family.

Functionally, may catalyze the S-adenosyl-L-methionine-dependent methylation of a specific base in rRNA. The chain is Putative rRNA methyltransferase YlbH (ylbH) from Bacillus subtilis (strain 168).